The sequence spans 124 residues: Ubiquinol-cytochrome-c reductase complex assembly factor 2 (124 aa).

Residues 1–13 constitute a mitochondrion transit peptide; the sequence is MASLRYRRFLKLC.

The protein localises to the mitochondrion matrix. It is found in the mitochondrion nucleoid. It localises to the mitochondrion. Its function is as follows. Required for the assembly of the ubiquinol-cytochrome c reductase complex (mitochondrial respiratory chain complex III or cytochrome b-c1 complex). May play a role in the modulation of respiratory chain activities such as oxygen consumption and ATP production. May be involved in cytochrome b translation and/or stability. The protein is Ubiquinol-cytochrome-c reductase complex assembly factor 2 (uqcc2) of Xenopus tropicalis (Western clawed frog).